The following is a 360-amino-acid chain: D-alanine--D-alanine ligase (360 aa).

The ATP-grasp domain maps to 146 to 352; the sequence is KLCVADAGIA…YRNLITRLLE (207 aa). Position 179–234 (179–234) interacts with ATP; that stretch reads EAQVSYPLFVKPASLGSSIGISKVHNREELHPALQAACALDWKVVVESTVKGREIE. Residues D305, E319, and N321 each contribute to the Mg(2+) site.

The protein belongs to the D-alanine--D-alanine ligase family. Mg(2+) is required as a cofactor. The cofactor is Mn(2+).

Its subcellular location is the cytoplasm. The catalysed reaction is 2 D-alanine + ATP = D-alanyl-D-alanine + ADP + phosphate + H(+). Its pathway is cell wall biogenesis; peptidoglycan biosynthesis. Functionally, cell wall formation. This Chlorobium chlorochromatii (strain CaD3) protein is D-alanine--D-alanine ligase.